Reading from the N-terminus, the 207-residue chain is Guanylate kinase (207 aa).

The 181-residue stretch at 4–184 folds into the Guanylate kinase-like domain; the sequence is GTLYIVSAPS…ALSDLKTIIR (181 aa). 11–18 is an ATP binding site; that stretch reads APSGAGKS.

It belongs to the guanylate kinase family.

The protein resides in the cytoplasm. It catalyses the reaction GMP + ATP = GDP + ADP. Its function is as follows. Essential for recycling GMP and indirectly, cGMP. In Salmonella paratyphi A (strain ATCC 9150 / SARB42), this protein is Guanylate kinase.